The following is a 1085-amino-acid chain: Solute carrier family 12 member 4 (1085 aa).

The Cytoplasmic segment spans residues 1–119; the sequence is MPHFTVVPVD…RRAAEAPSMG (119 aa). 5 positions are modified to phosphoserine: serine 24, serine 47, serine 51, serine 81, and serine 88. The discontinuously helical transmembrane segment at 120–141 threads the bilayer; sequence TLMGVYLPCLQNIFGVILFLRL. Positions 131 and 132 each coordinate K(+). At 142–149 the chain is on the extracellular side; the sequence is TWMVGTAG. The helical transmembrane segment at 150–172 threads the bilayer; it reads VLQALLIVLICCCCTLLTAISMS. Residues 173-196 lie on the Cytoplasmic side of the membrane; it reads AIATNGVVPAGGSYFMISRSLGPE. A helical membrane pass occupies residues 197–225; sequence FGGAVGLCFYLGTTFAAAMYILGAIEILL. Tyrosine 216 serves as a coordination point for K(+). Residues 226 to 248 lie on the Extracellular side of the membrane; the sequence is TYIAPPAAIFYPSGAHDTSNATL. An N-linked (GlcNAc...) asparagine glycan is attached at asparagine 245. 2 helical membrane passes run 249–271 and 272–297; these read NNMR…VGVK and YVNK…GGIK. At 298-419 the chain is on the extracellular side; the sequence is SIFDPPVFPV…LYVVADIATS (122 aa). A disulfide bridge connects residues cysteine 308 and cysteine 323. Residues asparagine 312, asparagine 331, asparagine 347, and asparagine 361 are each glycosylated (N-linked (GlcNAc...) asparagine). A disulfide bridge connects residues cysteine 343 and cysteine 353. Residues 420 to 440 form a helical membrane-spanning segment; sequence FTVLVGIFFPSVTGIMAGSNR. K(+)-binding residues include proline 429 and threonine 432. Chloride contacts are provided by glycine 433, isoleucine 434, and methionine 435. Residues 441-450 are Cytoplasmic-facing; the sequence is SGDLRDAQKS. A helical membrane pass occupies residues 451-473; the sequence is IPVGTILAIITTSLVYFSSVVLF. The Extracellular segment spans residues 474–504; sequence GACIEGVVLRDKYGDGVSRNLVVGTLAWPSP. The helical transmembrane segment at 505–531 threads the bilayer; sequence WVIVIGSFFSTCGAGLQSLTGAPRLLQ. At 532–554 the chain is on the cytoplasmic side; sequence AIAKDNIIPFLRVFGHGKVNGEP. A run of 2 helical transmembrane segments spans residues 555 to 575 and 576 to 598; these read TWAL…ASLD and MVAP…ACAV. Tyrosine 589 contributes to the chloride binding site. Residues 599–612 are Cytoplasmic-facing; the sequence is QTLLRTPNWRPRFK. The next 2 membrane-spanning stretches (helical) occupy residues 613 to 635 and 636 to 651; these read YYHW…VSSW and YYAL…IYKY. Residues 652–1085 are Cytoplasmic-facing; the sequence is IEYQGAEKEW…GGREVITIYS (434 aa). The tract at residues 665–681 is scissor helix; that stretch reads IRGLSLSAARYALLRLE. Residues leucine 697, lysine 699, lysine 707, tyrosine 708, and valine 730 each coordinate ATP. Serine 734 bears the Phosphoserine mark. ATP-binding residues include glycine 794, tryptophan 795, and tyrosine 797. Phosphoserine occurs at positions 916 and 967. Residue threonine 983 is modified to Phosphothreonine. Serine 1050 is modified (phosphoserine).

This sequence belongs to the SLC12A transporter family. K/Cl co-transporter subfamily. As to quaternary structure, homodimer; adopts a domain-swap conformation at the scissor helices connecting the transmembrane domain and C-terminal domain. Heterodimer with other K-Cl cotransporters. Phosphorylated, phosphorylation may regulate transporter activity. As to expression, ubiquitous. Levels are much higher in erythrocytes from patients with Hb SC and Hb SS compared to normal AA erythrocytes. This may contribute to red blood cell dehydration and to the manifestation of sickle cell disease by increasing the intracellular concentration of HbS. In terms of tissue distribution, not detected in circulating reticulocytes.

Its subcellular location is the cell membrane. The catalysed reaction is K(+)(in) + chloride(in) = K(+)(out) + chloride(out). Inhibited by WNK3. Mediates electroneutral potassium-chloride cotransport when activated by cell swelling. May contribute to cell volume homeostasis in single cells. May be involved in the regulation of basolateral Cl(-) exit in NaCl absorbing epithelia. In terms of biological role, no transporter activity. This is Solute carrier family 12 member 4 from Homo sapiens (Human).